The following is a 455-amino-acid chain: Phosphoglucosamine mutase (455 aa).

Residue Ser104 is the Phosphoserine intermediate of the active site. Mg(2+) is bound by residues Ser104, Asp253, Asp255, and Asp257. The residue at position 104 (Ser104) is a Phosphoserine.

This sequence belongs to the phosphohexose mutase family. Mg(2+) serves as cofactor. In terms of processing, activated by phosphorylation.

It carries out the reaction alpha-D-glucosamine 1-phosphate = D-glucosamine 6-phosphate. In terms of biological role, catalyzes the conversion of glucosamine-6-phosphate to glucosamine-1-phosphate. This chain is Phosphoglucosamine mutase, found in Psychrobacter cryohalolentis (strain ATCC BAA-1226 / DSM 17306 / VKM B-2378 / K5).